A 478-amino-acid chain; its full sequence is Crt homolog 3 (478 aa).

The segment at 1–30 (MGSDERKPLLSINDGDDDFNHQDVSTKTPP) is disordered. Over 1 to 52 (MGSDERKPLLSINDGDDDFNHQDVSTKTPPIKKESLSNKFKSFLKKSMTKET) the chain is Cytoplasmic. The helical transmembrane segment at 53-73 (LPILIYVLLYIISGVINVVLL) threads the bilayer. At 74–83 (KKLMIKFVNY) the chain is on the vacuolar side. A helical membrane pass occupies residues 84–104 (GFFLSQITNYGYLPIFLVAMW). Residues 105 to 124 (YKMYCTSDVPKETRNFPQYK) are Cytoplasmic-facing. A helical membrane pass occupies residues 125–145 (FVIMGLLDAINGFFVVIGGVS). Residues 146-149 (TSGP) lie on the Vacuolar side of the membrane. The chain crosses the membrane as a helical span at residues 150-170 (LQQLLNQAIIPFTMIASFIFL). Topologically, residues 171–178 (RERYSLFQ) are cytoplasmic. The chain crosses the membrane as a helical span at residues 179–199 (LGGAAVILGGVIVSLIPSLVG). Over 200 to 205 (GSSGGN) the chain is Vacuolar. Residues 206-226 (ILFYNFFYLISVIPGALSNVY) traverse the membrane as a helical segment. The Cytoplasmic portion of the chain corresponds to 227 to 237 (KDIAFQSIDMD). A helical transmembrane segment spans residues 238-258 (VWYLQFWDCLYQSLFGSILFP). Residues 259–322 (VNNWLPPPAT…FVCDDCHNTW (64 aa)) are Vacuolar-facing. Asn-296 carries N-linked (GlcNAc...) asparagine glycosylation. The chain crosses the membrane as a helical span at residues 323–343 (IIVLIYMTVNIAYNIFILLVL). The Cytoplasmic portion of the chain corresponds to 344 to 352 (KHAGATVYS). A helical transmembrane segment spans residues 353–373 (IANTVILPLTNIFFSIHFIMG). At 374–376 (AAT) the chain is on the vacuolar side. Residues 377 to 397 (TPFSALSVAGLLLILFGLGGY) traverse the membrane as a helical segment. Residues 398 to 478 (RIGSMIKKPP…RYRATNIINN (81 aa)) are Cytoplasmic-facing. The interval 404–446 (KKPPPDSKKDSEQQGGEGGAGDGDSSDNKNNLGDSAEIPQQIQ) is disordered. Positions 406 to 415 (PPPDSKKDSE) are enriched in basic and acidic residues.

It belongs to the CRT-like transporter family.

The protein resides in the vacuole membrane. Nutrient transporter. Involved in maintaining the osmotic homeostasis of the digestive vacuole. The polypeptide is Crt homolog 3 (crtp3) (Dictyostelium discoideum (Social amoeba)).